Reading from the N-terminus, the 90-residue chain is DNA-binding protein HU-alpha (90 aa).

The protein belongs to the bacterial histone-like protein family. In terms of assembly, heterodimer of an alpha and a beta chain.

Its function is as follows. Histone-like DNA-binding protein which is capable of wrapping DNA to stabilize it, and thus to prevent its denaturation under extreme environmental conditions. The chain is DNA-binding protein HU-alpha (hupA) from Salmonella typhi.